The following is a 361-amino-acid chain: Phospho-N-acetylmuramoyl-pentapeptide-transferase (361 aa).

The next 10 helical transmembrane spans lie at 17–37 (SIYL…LFAG), 66–86 (GTPT…SIFI), 90–110 (TNSL…IGFI), 129–149 (LLFQ…IGLT), 162–182 (ISAY…QIVL), 197–217 (GLAI…AYFT), 232–252 (VGSG…LGFL), 261–281 (IFMG…IAII), 286–306 (LMLP…ILQV), and 340–360 (FWIG…MRGI).

The protein belongs to the glycosyltransferase 4 family. MraY subfamily. Requires Mg(2+) as cofactor.

The protein resides in the cell inner membrane. It catalyses the reaction UDP-N-acetyl-alpha-D-muramoyl-L-alanyl-gamma-D-glutamyl-meso-2,6-diaminopimeloyl-D-alanyl-D-alanine + di-trans,octa-cis-undecaprenyl phosphate = di-trans,octa-cis-undecaprenyl diphospho-N-acetyl-alpha-D-muramoyl-L-alanyl-D-glutamyl-meso-2,6-diaminopimeloyl-D-alanyl-D-alanine + UMP. It functions in the pathway cell wall biogenesis; peptidoglycan biosynthesis. Functionally, catalyzes the initial step of the lipid cycle reactions in the biosynthesis of the cell wall peptidoglycan: transfers peptidoglycan precursor phospho-MurNAc-pentapeptide from UDP-MurNAc-pentapeptide onto the lipid carrier undecaprenyl phosphate, yielding undecaprenyl-pyrophosphoryl-MurNAc-pentapeptide, known as lipid I. The protein is Phospho-N-acetylmuramoyl-pentapeptide-transferase of Fusobacterium nucleatum subsp. nucleatum (strain ATCC 25586 / DSM 15643 / BCRC 10681 / CIP 101130 / JCM 8532 / KCTC 2640 / LMG 13131 / VPI 4355).